A 166-amino-acid chain; its full sequence is Phosphopantetheine adenylyltransferase (166 aa).

Substrate is bound at residue serine 11. ATP contacts are provided by residues 11-12 and histidine 19; that span reads SF. Residues lysine 43, alanine 76, and arginine 90 each coordinate substrate. Residues 91 to 93, glutamate 101, and 126 to 132 each bind ATP; these read GLR and LQPISSS.

Belongs to the bacterial CoaD family. As to quaternary structure, homohexamer. Requires Mg(2+) as cofactor.

It localises to the cytoplasm. It carries out the reaction (R)-4'-phosphopantetheine + ATP + H(+) = 3'-dephospho-CoA + diphosphate. The protein operates within cofactor biosynthesis; coenzyme A biosynthesis; CoA from (R)-pantothenate: step 4/5. In terms of biological role, reversibly transfers an adenylyl group from ATP to 4'-phosphopantetheine, yielding dephospho-CoA (dPCoA) and pyrophosphate. This is Phosphopantetheine adenylyltransferase from Streptococcus equi subsp. zooepidemicus (strain H70).